The primary structure comprises 130 residues: Ribosome-binding factor A (130 aa).

The protein belongs to the RbfA family. Monomer. Binds 30S ribosomal subunits, but not 50S ribosomal subunits or 70S ribosomes.

Its subcellular location is the cytoplasm. Its function is as follows. One of several proteins that assist in the late maturation steps of the functional core of the 30S ribosomal subunit. Associates with free 30S ribosomal subunits (but not with 30S subunits that are part of 70S ribosomes or polysomes). Required for efficient processing of 16S rRNA. May interact with the 5'-terminal helix region of 16S rRNA. This chain is Ribosome-binding factor A, found in Prochlorococcus marinus (strain SARG / CCMP1375 / SS120).